The chain runs to 239 residues: tRNA (guanine-N(1)-)-methyltransferase (239 aa).

S-adenosyl-L-methionine-binding positions include glycine 108 and 127–132; that span reads LGDYVL.

The protein belongs to the RNA methyltransferase TrmD family. As to quaternary structure, homodimer.

Its subcellular location is the cytoplasm. It catalyses the reaction guanosine(37) in tRNA + S-adenosyl-L-methionine = N(1)-methylguanosine(37) in tRNA + S-adenosyl-L-homocysteine + H(+). Functionally, specifically methylates guanosine-37 in various tRNAs. This is tRNA (guanine-N(1)-)-methyltransferase from Streptococcus pneumoniae serotype 2 (strain D39 / NCTC 7466).